Reading from the N-terminus, the 423-residue chain is Putative competence-damage inducible protein (423 aa).

This sequence belongs to the CinA family.

This chain is Putative competence-damage inducible protein, found in Streptococcus pyogenes serotype M1.